A 420-amino-acid chain; its full sequence is Transcription factor bHLH89 (420 aa).

Positions 196–216 (EENNNLDDGLNRKGRGSKKRK) are disordered. Residues 207–216 (RKGRGSKKRK) show a composition bias toward basic residues. The bHLH domain occupies 212-261 (SKKRKIFPTERERRVHFKDRFGDLKNLIPNPTKNDRASIVGEAIDYIKEL).

Homodimer. Flowers.

Its subcellular location is the nucleus. This is Transcription factor bHLH89 (BHLH89) from Arabidopsis thaliana (Mouse-ear cress).